We begin with the raw amino-acid sequence, 200 residues long: BREX protein BrxA (200 aa).

The protein belongs to the BrxA family.

In terms of biological role, BREX systems (bacteriophage exclusion) provide immunity against bacteriophage. Part of a type 1 BREX system. This system allows phage adsorption but prevents phage DNA replication, without degradation of the phage DNA. Methylation of bacterial DNA by PglX probably guides self/non-self discrimination. When the brxA-brxB-brxC-pglX and pglZ-brxL operons are transformed into a susceptible B.subtilis strain (BEST7003) they confer resistance to bacteriophages SPbeta, SP16, Zeta, phi3T and SP02 and partial protection to phages SP01 and SP82G (these include lytic and temperate phage). They do not protect against phages phi105, rho10 or rho14. Additionally confers a very slight reduction in efficiency of plasmid transformation. The chain is BREX protein BrxA from Bacillus cereus (strain H3081.97).